Consider the following 169-residue polypeptide: Allophycocyanin subunit beta-18 (169 aa).

The residue at position 72 (Asn-72) is an N4-methylasparagine. Cys-82 serves as a coordination point for (2R,3E)-phycocyanobilin.

It belongs to the phycobiliprotein family. Heterodimer of ApcE and this beta chain. Contains one covalently linked bilin chromophore. The chromophore is added by phycocyanobilin lyase CpcS 1.

It is found in the cellular thylakoid membrane. Functionally, a variant beta-allophycocyanin (AP) which forms a complex with ApcE, a phycobilisome terminal emitter that influences energy transfer to photosystem II. This Nostoc sp. (strain PCC 7120 / SAG 25.82 / UTEX 2576) protein is Allophycocyanin subunit beta-18 (apcF).